We begin with the raw amino-acid sequence, 692 residues long: Glycine--tRNA ligase beta subunit (692 aa).

Belongs to the class-II aminoacyl-tRNA synthetase family. Tetramer of two alpha and two beta subunits.

The protein localises to the cytoplasm. It carries out the reaction tRNA(Gly) + glycine + ATP = glycyl-tRNA(Gly) + AMP + diphosphate. The sequence is that of Glycine--tRNA ligase beta subunit from Oceanobacillus iheyensis (strain DSM 14371 / CIP 107618 / JCM 11309 / KCTC 3954 / HTE831).